The following is a 111-amino-acid chain: Nucleoid-associated protein Cag_1190 (111 aa).

The protein belongs to the YbaB/EbfC family. Homodimer.

The protein resides in the cytoplasm. It localises to the nucleoid. Its function is as follows. Binds to DNA and alters its conformation. May be involved in regulation of gene expression, nucleoid organization and DNA protection. This is Nucleoid-associated protein Cag_1190 from Chlorobium chlorochromatii (strain CaD3).